A 171-amino-acid polypeptide reads, in one-letter code: Methyl-coenzyme M reductase operon protein D (171 aa).

In terms of assembly, MCR is composed of three subunits: alpha, beta, and gamma. The function of proteins C and D is not known.

The protein is Methyl-coenzyme M reductase operon protein D (mcrD) of Methanosarcina barkeri (strain Fusaro / DSM 804).